The primary structure comprises 276 residues: Large ribosomal subunit protein uL2 (276 aa).

A disordered region spans residues G223–K276. Residues D230 to A240 show a composition bias toward basic and acidic residues. Over residues L257–K276 the composition is skewed to basic residues.

This sequence belongs to the universal ribosomal protein uL2 family. As to quaternary structure, part of the 50S ribosomal subunit. Forms a bridge to the 30S subunit in the 70S ribosome.

One of the primary rRNA binding proteins. Required for association of the 30S and 50S subunits to form the 70S ribosome, for tRNA binding and peptide bond formation. It has been suggested to have peptidyltransferase activity; this is somewhat controversial. Makes several contacts with the 16S rRNA in the 70S ribosome. The polypeptide is Large ribosomal subunit protein uL2 (Thermus thermophilus (strain ATCC BAA-163 / DSM 7039 / HB27)).